Reading from the N-terminus, the 158-residue chain is NAD(P)H-quinone oxidoreductase subunit N (158 aa).

The protein belongs to the complex I NdhN subunit family. In terms of assembly, NDH-1 can be composed of about 15 different subunits; different subcomplexes with different compositions have been identified which probably have different functions.

Its subcellular location is the cellular thylakoid membrane. It catalyses the reaction a plastoquinone + NADH + (n+1) H(+)(in) = a plastoquinol + NAD(+) + n H(+)(out). The catalysed reaction is a plastoquinone + NADPH + (n+1) H(+)(in) = a plastoquinol + NADP(+) + n H(+)(out). Its function is as follows. NDH-1 shuttles electrons from an unknown electron donor, via FMN and iron-sulfur (Fe-S) centers, to quinones in the respiratory and/or the photosynthetic chain. The immediate electron acceptor for the enzyme in this species is believed to be plastoquinone. Couples the redox reaction to proton translocation, and thus conserves the redox energy in a proton gradient. Cyanobacterial NDH-1 also plays a role in inorganic carbon-concentration. The chain is NAD(P)H-quinone oxidoreductase subunit N from Trichodesmium erythraeum (strain IMS101).